The sequence spans 83 residues: MLKSFLIFLVRFYQKNISPAFPASCRYRPTCSTYMIEAIQKHGLKGVLMGIARILRCHPLAHGGNDPVPDHFSLRRNKTDISD.

The disordered stretch occupies residues Gly63–Asp83. A compositionally biased stretch (basic and acidic residues) spans Val68–Asp83.

Belongs to the UPF0161 family.

Its subcellular location is the cell membrane. Functionally, could be involved in insertion of integral membrane proteins into the membrane. This is Putative membrane protein insertion efficiency factor from Streptococcus agalactiae serotype Ia (strain ATCC 27591 / A909 / CDC SS700).